The chain runs to 594 residues: Insulin-like growth factor 2 mRNA-binding protein 3-A (594 aa).

RRM domains lie at 2-75 and 81-156; these read NKLY…HSVP and RKLQ…YIPD. A compositionally biased stretch (low complexity) spans 161–177; sequence PQAPSQQLQQQPQQQHP. The segment at 161-206 is disordered; it reads PQAPSQQLQQQPQQQHPQGRRGFGQRGPARQGSPGAAARPKPQTEV. 2 KH domains span residues 205–270 and 286–353; these read EVPL…CKII and EIPL…EEEI. A disordered region spans residues 392–415; the sequence is GMPPPSVGVPSPTSSTSYPPFGQQ. Residues 399 to 411 are compositionally biased toward low complexity; that stretch reads GVPSPTSSTSYPP. 2 consecutive KH domains span residues 418-483 and 500-566; these read SETV…QGRI and KLET…QRKI.

This sequence belongs to the RRM IMP/VICKZ family. Homodimer and multimer. Associates with microtubules. Interaction with a translocation machinery protein TRAPA of the endoplasmic reticulum. Component of a mRNP complex, at least composed of DAZAP1, IGF2BP3, STAU and VgRBP60. The mRNP complex with DAZAP1, IGF2BP3, STAU and VgRBP60 is only found in the cytoplasm. Interacts with a hnRNP 1 related RNA transport protein VgRBP60 both in the nucleus (in a RNA-independent manner) and the cytoplasm (in a RNA-dependent manner). Found in a B3 activator complex.

It is found in the nucleus. The protein resides in the cytoplasm. It localises to the endoplasmic reticulum. Functionally, RNA-binding protein that acts as a regulator of mRNA transport and localization. Binds to the RNA sequence motif 5'-UUCAC-3'. Preferentially binds to N6-methyladenosine (m6A)-containing mRNAs and increases their stability. Mediates the specific association of Vg1 RNA to microtubules. Binds specifically to the vegetal localization elements (VLE or VgLE) in the 3'-UTR of Vg1 and VegT mRNAs. Binds to the Vg1 and VegT mRNAs in both the nucleus and the cytoplasm. May regulate mRNA translation. Acts as a transcription regulator. Binds to the 5'-[TA]GGTTACT-3' motif within element 3 of the TFIIIA gene promoter. In Xenopus laevis (African clawed frog), this protein is Insulin-like growth factor 2 mRNA-binding protein 3-A (igf2bp3-a).